Reading from the N-terminus, the 356-residue chain is MQTLHALLRDIPAPDAEAMARAQQHIDGLLKPPGSLGRLETLAVQLAGMPGLNGTPQVGEKAVLVMCADHGVWDEGVAVSPKIVTAIQAANMTRGTTGVCVLAAQAGAKVHVIDVGIDAEPIPGVVNMRVARGCGNIAVGPAMSRLQAEALLLEVSRYTCDLAQRGVTLFGVGELGMANTTPAAAMVSVFTGSDAKEVVGIGANLPPSRIDNKVDVVRRAIAINQPNPRDGIDVLSKVGGFDLVGMTGVMLGAARCGLPVLLDGFLSYSAALAACQIAPAVRPYLIPSHFSAEKGARIALAHLSMEPYLHMAMRLGEGSGAALAMPIVEAACAMFHNMGELAASNIVLPEGNANAT.

E317 (proton acceptor) is an active-site residue.

Belongs to the CobT family. In terms of assembly, homodimer.

The catalysed reaction is 5,6-dimethylbenzimidazole + nicotinate beta-D-ribonucleotide = alpha-ribazole 5'-phosphate + nicotinate + H(+). It functions in the pathway nucleoside biosynthesis; alpha-ribazole biosynthesis; alpha-ribazole from 5,6-dimethylbenzimidazole: step 1/2. In terms of biological role, catalyzes the synthesis of alpha-ribazole-5'-phosphate from nicotinate mononucleotide (NAMN) and 5,6-dimethylbenzimidazole (DMB). The polypeptide is Nicotinate-nucleotide--dimethylbenzimidazole phosphoribosyltransferase (Salmonella dublin (strain CT_02021853)).